The chain runs to 319 residues: Acetyl-coenzyme A carboxylase carboxyl transferase subunit alpha (319 aa).

The CoA carboxyltransferase C-terminal domain occupies 43 to 296 (LRDKSIELTR…KKQLLFDLSE (254 aa)).

This sequence belongs to the AccA family. In terms of assembly, acetyl-CoA carboxylase is a heterohexamer composed of biotin carboxyl carrier protein (AccB), biotin carboxylase (AccC) and two subunits each of ACCase subunit alpha (AccA) and ACCase subunit beta (AccD).

The protein resides in the cytoplasm. The enzyme catalyses N(6)-carboxybiotinyl-L-lysyl-[protein] + acetyl-CoA = N(6)-biotinyl-L-lysyl-[protein] + malonyl-CoA. It participates in lipid metabolism; malonyl-CoA biosynthesis; malonyl-CoA from acetyl-CoA: step 1/1. Functionally, component of the acetyl coenzyme A carboxylase (ACC) complex. First, biotin carboxylase catalyzes the carboxylation of biotin on its carrier protein (BCCP) and then the CO(2) group is transferred by the carboxyltransferase to acetyl-CoA to form malonyl-CoA. The sequence is that of Acetyl-coenzyme A carboxylase carboxyl transferase subunit alpha from Baumannia cicadellinicola subsp. Homalodisca coagulata.